Here is a 345-residue protein sequence, read N- to C-terminus: Phenylalanine--tRNA ligase alpha subunit (345 aa).

Position 253 (glutamate 253) interacts with Mg(2+).

Belongs to the class-II aminoacyl-tRNA synthetase family. Phe-tRNA synthetase alpha subunit type 1 subfamily. In terms of assembly, tetramer of two alpha and two beta subunits. Requires Mg(2+) as cofactor.

The protein localises to the cytoplasm. It catalyses the reaction tRNA(Phe) + L-phenylalanine + ATP = L-phenylalanyl-tRNA(Phe) + AMP + diphosphate + H(+). This Nitratidesulfovibrio vulgaris (strain DSM 19637 / Miyazaki F) (Desulfovibrio vulgaris) protein is Phenylalanine--tRNA ligase alpha subunit.